A 93-amino-acid polypeptide reads, in one-letter code: Protein S100-A5 (93 aa).

EF-hand domains lie at M12–K47 and M48–A83. Ca(2+)-binding residues include T28, E33, D61, N63, D65, E67, and E72.

This sequence belongs to the S-100 family. As to quaternary structure, homodimer.

Its function is as follows. Binds calcium, zinc and copper. One subunit can simultaneously bind 2 calcium ions or 2 copper ions plus 1 zinc ion. Calcium and copper ions compete for the same binding sites. This chain is Protein S100-A5 (S100a5), found in Mus musculus (Mouse).